Here is a 218-residue protein sequence, read N- to C-terminus: Small ribosomal subunit protein uS3c (218 aa).

In terms of domain architecture, KH type-2 spans 39–118 (IRNFIKNYVQ…KLNIAITRIA (80 aa)).

It belongs to the universal ribosomal protein uS3 family. In terms of assembly, part of the 30S ribosomal subunit.

The protein localises to the plastid. The protein resides in the chloroplast. In Ipomoea purpurea (Common morning glory), this protein is Small ribosomal subunit protein uS3c (rps3).